Here is a 312-residue protein sequence, read N- to C-terminus: Methionyl-tRNA formyltransferase (312 aa).

(6S)-5,6,7,8-tetrahydrofolate is bound at residue 109–112 (SLLP).

Belongs to the Fmt family.

The catalysed reaction is L-methionyl-tRNA(fMet) + (6R)-10-formyltetrahydrofolate = N-formyl-L-methionyl-tRNA(fMet) + (6S)-5,6,7,8-tetrahydrofolate + H(+). Attaches a formyl group to the free amino group of methionyl-tRNA(fMet). The formyl group appears to play a dual role in the initiator identity of N-formylmethionyl-tRNA by promoting its recognition by IF2 and preventing the misappropriation of this tRNA by the elongation apparatus. The polypeptide is Methionyl-tRNA formyltransferase (Listeria monocytogenes serotype 4b (strain CLIP80459)).